The chain runs to 545 residues: CTP synthase (545 aa).

The interval 1-266 (MTTRYIFVTG…DDLVVKRFGL (266 aa)) is amidoligase domain. Ser-14 is a CTP binding site. Ser-14 lines the UTP pocket. Residues 15–20 (SLGKGI) and Asp-72 contribute to the ATP site. 2 residues coordinate Mg(2+): Asp-72 and Glu-140. CTP contacts are provided by residues 147–149 (DIE), 187–192 (KTKPTQ), and Lys-223. UTP is bound by residues 187–192 (KTKPTQ) and Lys-223. 239-241 (KDV) is a binding site for ATP. Positions 291–542 (VIGMVGKYIE…IAAASAHQKR (252 aa)) constitute a Glutamine amidotransferase type-1 domain. Gly-352 contributes to the L-glutamine binding site. Residue Cys-379 is the Nucleophile; for glutamine hydrolysis of the active site. L-glutamine-binding positions include 380 to 383 (LGMQ), Glu-403, and Arg-470. Active-site residues include His-515 and Glu-517.

It belongs to the CTP synthase family. In terms of assembly, homotetramer.

It catalyses the reaction UTP + L-glutamine + ATP + H2O = CTP + L-glutamate + ADP + phosphate + 2 H(+). It carries out the reaction L-glutamine + H2O = L-glutamate + NH4(+). The catalysed reaction is UTP + NH4(+) + ATP = CTP + ADP + phosphate + 2 H(+). It participates in pyrimidine metabolism; CTP biosynthesis via de novo pathway; CTP from UDP: step 2/2. Its activity is regulated as follows. Allosterically activated by GTP, when glutamine is the substrate; GTP has no effect on the reaction when ammonia is the substrate. The allosteric effector GTP functions by stabilizing the protein conformation that binds the tetrahedral intermediate(s) formed during glutamine hydrolysis. Inhibited by the product CTP, via allosteric rather than competitive inhibition. Functionally, catalyzes the ATP-dependent amination of UTP to CTP with either L-glutamine or ammonia as the source of nitrogen. Regulates intracellular CTP levels through interactions with the four ribonucleotide triphosphates. This Shewanella baltica (strain OS155 / ATCC BAA-1091) protein is CTP synthase.